A 172-amino-acid chain; its full sequence is Translationally-controlled tumor protein homolog (172 aa).

Residues 1–172 (MIIYKDTVTE…FKDGLISEKC (172 aa)) enclose the TCTP domain.

The protein belongs to the TCTP family.

Its subcellular location is the cytoplasm. Functionally, involved in calcium binding and microtubule stabilization. The protein is Translationally-controlled tumor protein homolog (tpt1) of Xenopus tropicalis (Western clawed frog).